A 266-amino-acid polypeptide reads, in one-letter code: Imidazole glycerol phosphate synthase subunit HisF (266 aa).

Residues aspartate 11 and aspartate 130 contribute to the active site.

Belongs to the HisA/HisF family. Heterodimer of HisH and HisF.

It localises to the cytoplasm. The enzyme catalyses 5-[(5-phospho-1-deoxy-D-ribulos-1-ylimino)methylamino]-1-(5-phospho-beta-D-ribosyl)imidazole-4-carboxamide + L-glutamine = D-erythro-1-(imidazol-4-yl)glycerol 3-phosphate + 5-amino-1-(5-phospho-beta-D-ribosyl)imidazole-4-carboxamide + L-glutamate + H(+). Its pathway is amino-acid biosynthesis; L-histidine biosynthesis; L-histidine from 5-phospho-alpha-D-ribose 1-diphosphate: step 5/9. Its function is as follows. IGPS catalyzes the conversion of PRFAR and glutamine to IGP, AICAR and glutamate. The HisF subunit catalyzes the cyclization activity that produces IGP and AICAR from PRFAR using the ammonia provided by the HisH subunit. The sequence is that of Imidazole glycerol phosphate synthase subunit HisF from Delftia acidovorans (strain DSM 14801 / SPH-1).